Consider the following 130-residue polypeptide: Glycine cleavage system H protein (130 aa).

In terms of domain architecture, Lipoyl-binding spans 24–106 (SVTVGITEHA…YGDGWIMRIQ (83 aa)). Lysine 65 carries the post-translational modification N6-lipoyllysine.

Belongs to the GcvH family. In terms of assembly, the glycine cleavage system is composed of four proteins: P, T, L and H. Requires (R)-lipoate as cofactor.

Functionally, the glycine cleavage system catalyzes the degradation of glycine. The H protein shuttles the methylamine group of glycine from the P protein to the T protein. This is Glycine cleavage system H protein from Halorhodospira halophila (strain DSM 244 / SL1) (Ectothiorhodospira halophila (strain DSM 244 / SL1)).